The primary structure comprises 185 residues: Elongation factor P (185 aa).

This sequence belongs to the elongation factor P family.

It localises to the cytoplasm. The protein operates within protein biosynthesis; polypeptide chain elongation. Functionally, involved in peptide bond synthesis. Stimulates efficient translation and peptide-bond synthesis on native or reconstituted 70S ribosomes in vitro. Probably functions indirectly by altering the affinity of the ribosome for aminoacyl-tRNA, thus increasing their reactivity as acceptors for peptidyl transferase. The polypeptide is Elongation factor P (Bacillus cytotoxicus (strain DSM 22905 / CIP 110041 / 391-98 / NVH 391-98)).